Reading from the N-terminus, the 1615-residue chain is DNA-directed RNA polymerase I subunit rpa1 (1615 aa).

Positions 65, 68, 75, and 78 each coordinate Zn(2+). A disordered region spans residues 155 to 181 (GKSNEEGEEVMESDESDSDKMDTDENK). The span at 160–171 (EGEEVMESDESD) shows a compositional bias: acidic residues. Positions 172–181 (SDKMDTDENK) are enriched in basic and acidic residues. Mg(2+)-binding residues include aspartate 593, aspartate 595, and aspartate 597. Residues 955–967 (PQDYFFHCMAGRE) are bridging helix. The span at 1305–1316 (DSLTINDDDAPA) shows a compositional bias: acidic residues. The disordered stretch occupies residues 1305–1411 (DSLTINDDDA…NSRSSNSFSD (107 aa)). Over residues 1317 to 1336 (NDDTTNNDENTSQQQPSSQN) the composition is skewed to low complexity. Positions 1366–1399 (EDGEEEAEEKDSDEGESEAEESDDKSDVDSDSDE) are enriched in acidic residues. Residues 1400-1411 (ISNSRSSNSFSD) are compositionally biased toward low complexity.

This sequence belongs to the RNA polymerase beta' chain family. In terms of assembly, component of the RNA polymerase I (Pol I) complex consisting of at least 13 subunits.

It is found in the nucleus. The catalysed reaction is RNA(n) + a ribonucleoside 5'-triphosphate = RNA(n+1) + diphosphate. Functionally, DNA-dependent RNA polymerase catalyzes the transcription of DNA into RNA using the four ribonucleoside triphosphates as substrates. Largest and catalytic core component of RNA polymerase I which synthesizes ribosomal RNA precursors. Forms the polymerase active center together with the second largest subunit. A single stranded DNA template strand of the promoter is positioned within the central active site cleft of Pol I. A bridging helix emanates from RPA1 and crosses the cleft near the catalytic site and is thought to promote translocation of Pol I by acting as a ratchet that moves the RNA-DNA hybrid through the active site by switching from straight to bent conformations at each step of nucleotide addition. The protein is DNA-directed RNA polymerase I subunit rpa1 (polr1a) of Dictyostelium discoideum (Social amoeba).